Consider the following 447-residue polypeptide: Imidazolonepropionase (447 aa).

Fe(3+) contacts are provided by H85 and H87. The Zn(2+) site is built by H85 and H87. 3 residues coordinate 4-imidazolone-5-propanoate: R94, Y157, and H190. Y157 is an N-formimidoyl-L-glutamate binding site. H255 serves as a coordination point for Fe(3+). Zn(2+) is bound at residue H255. E258 is a binding site for 4-imidazolone-5-propanoate. D329 contacts Fe(3+). Position 329 (D329) interacts with Zn(2+). Positions 331 and 333 each coordinate N-formimidoyl-L-glutamate. S334 contacts 4-imidazolone-5-propanoate.

Belongs to the metallo-dependent hydrolases superfamily. HutI family. It depends on Zn(2+) as a cofactor. Fe(3+) is required as a cofactor.

It is found in the cytoplasm. It catalyses the reaction 4-imidazolone-5-propanoate + H2O = N-formimidoyl-L-glutamate. It functions in the pathway amino-acid degradation; L-histidine degradation into L-glutamate; N-formimidoyl-L-glutamate from L-histidine: step 3/3. In terms of biological role, catalyzes the hydrolytic cleavage of the carbon-nitrogen bond in imidazolone-5-propanoate to yield N-formimidoyl-L-glutamate. It is the third step in the universal histidine degradation pathway. In Shouchella clausii (strain KSM-K16) (Alkalihalobacillus clausii), this protein is Imidazolonepropionase.